The sequence spans 750 residues: Photosystem I P700 chlorophyll a apoprotein A1 (750 aa).

A run of 8 helical transmembrane segments spans residues 70-93 (VFSA…FHGA), 156-179 (LYCT…FHYH), 195-219 (LNHH…HVSL), 291-309 (IAHH…GHMY), 346-369 (WHAQ…HHMY), 385-411 (LSLF…IFMV), 433-455 (AIIS…LYIH), and 531-549 (FLVH…LILL). The [4Fe-4S] cluster site is built by Cys-573 and Cys-582. 2 helical membrane passes run 589–610 (HVFL…HFSW) and 664–686 (LSAY…MFLF). Residue His-675 coordinates chlorophyll a'. Residues Met-683 and Tyr-691 each coordinate chlorophyll a. Trp-692 lines the phylloquinone pocket. The chain crosses the membrane as a helical span at residues 724–744 (AVGVTHYLLGGIATTWAFFLA).

It belongs to the PsaA/PsaB family. As to quaternary structure, the PsaA/B heterodimer binds the P700 chlorophyll special pair and subsequent electron acceptors. PSI consists of a core antenna complex that captures photons, and an electron transfer chain that converts photonic excitation into a charge separation. The eukaryotic PSI reaction center is composed of at least 11 subunits. P700 is a chlorophyll a/chlorophyll a' dimer, A0 is one or more chlorophyll a, A1 is one or both phylloquinones and FX is a shared 4Fe-4S iron-sulfur center. is required as a cofactor.

It localises to the plastid. Its subcellular location is the chloroplast thylakoid membrane. It catalyses the reaction reduced [plastocyanin] + hnu + oxidized [2Fe-2S]-[ferredoxin] = oxidized [plastocyanin] + reduced [2Fe-2S]-[ferredoxin]. In terms of biological role, psaA and PsaB bind P700, the primary electron donor of photosystem I (PSI), as well as the electron acceptors A0, A1 and FX. PSI is a plastocyanin-ferredoxin oxidoreductase, converting photonic excitation into a charge separation, which transfers an electron from the donor P700 chlorophyll pair to the spectroscopically characterized acceptors A0, A1, FX, FA and FB in turn. Oxidized P700 is reduced on the lumenal side of the thylakoid membrane by plastocyanin. This Saccharum hybrid (Sugarcane) protein is Photosystem I P700 chlorophyll a apoprotein A1.